Here is a 217-residue protein sequence, read N- to C-terminus: Adenylate kinase (217 aa).

10–15 (GAGKGT) provides a ligand contact to ATP. Positions 30-59 (STGDIFRAAMKNETPMGIEAKKYIDKGELV) are NMP. Residues threonine 31, arginine 36, 57–59 (ELV), 85–88 (GFPR), and glutamine 92 each bind AMP. Residues 126 to 164 (GRFICRNCGATYHKLYNAPKVEGTCDVCGHHEFYQRDDD) are LID. ATP is bound at residue arginine 127. 2 residues coordinate Zn(2+): cysteine 130 and cysteine 133. An ATP-binding site is contributed by 136-137 (TY). Positions 150 and 153 each coordinate Zn(2+). AMP-binding residues include arginine 161 and arginine 172. Position 200 (glutamine 200) interacts with ATP.

It belongs to the adenylate kinase family. As to quaternary structure, monomer.

The protein resides in the cytoplasm. It carries out the reaction AMP + ATP = 2 ADP. The protein operates within purine metabolism; AMP biosynthesis via salvage pathway; AMP from ADP: step 1/1. Catalyzes the reversible transfer of the terminal phosphate group between ATP and AMP. Plays an important role in cellular energy homeostasis and in adenine nucleotide metabolism. The sequence is that of Adenylate kinase from Limosilactobacillus reuteri subsp. reuteri (strain JCM 1112) (Lactobacillus reuteri).